Reading from the N-terminus, the 310-residue chain is tRNA-cytidine(32) 2-sulfurtransferase (310 aa).

The PP-loop motif motif lies at 45 to 50 (SGGKDS). [4Fe-4S] cluster contacts are provided by C120, C123, and C211.

This sequence belongs to the TtcA family. Homodimer. It depends on Mg(2+) as a cofactor. [4Fe-4S] cluster serves as cofactor.

Its subcellular location is the cytoplasm. The enzyme catalyses cytidine(32) in tRNA + S-sulfanyl-L-cysteinyl-[cysteine desulfurase] + AH2 + ATP = 2-thiocytidine(32) in tRNA + L-cysteinyl-[cysteine desulfurase] + A + AMP + diphosphate + H(+). It functions in the pathway tRNA modification. Its function is as follows. Catalyzes the ATP-dependent 2-thiolation of cytidine in position 32 of tRNA, to form 2-thiocytidine (s(2)C32). The sulfur atoms are provided by the cysteine/cysteine desulfurase (IscS) system. The protein is tRNA-cytidine(32) 2-sulfurtransferase of Shewanella putrefaciens (strain CN-32 / ATCC BAA-453).